The sequence spans 504 residues: ATP synthase subunit alpha (504 aa).

An ATP-binding site is contributed by 172 to 179 (GDRQTGKT).

Belongs to the ATPase alpha/beta chains family. As to quaternary structure, F-type ATPases have 2 components, CF(1) - the catalytic core - and CF(0) - the membrane proton channel. CF(1) has five subunits: alpha(3), beta(3), gamma(1), delta(1), epsilon(1). CF(0) has three main subunits: a(1), b(2) and c(9-12). The alpha and beta chains form an alternating ring which encloses part of the gamma chain. CF(1) is attached to CF(0) by a central stalk formed by the gamma and epsilon chains, while a peripheral stalk is formed by the delta and b chains.

The protein resides in the cell inner membrane. It carries out the reaction ATP + H2O + 4 H(+)(in) = ADP + phosphate + 5 H(+)(out). In terms of biological role, produces ATP from ADP in the presence of a proton gradient across the membrane. The alpha chain is a regulatory subunit. In Petrotoga mobilis (strain DSM 10674 / SJ95), this protein is ATP synthase subunit alpha.